The primary structure comprises 87 residues: Acylphosphatase (87 aa).

The Acylphosphatase-like domain occupies 2-87 (RLTALVSGTV…ATGLRDFHVY (86 aa)). Residues Arg17 and Asn35 contribute to the active site.

It belongs to the acylphosphatase family.

The catalysed reaction is an acyl phosphate + H2O = a carboxylate + phosphate + H(+). This Deinococcus geothermalis (strain DSM 11300 / CIP 105573 / AG-3a) protein is Acylphosphatase (acyP).